Reading from the N-terminus, the 206-residue chain is Dephospho-CoA kinase (206 aa).

The DPCK domain occupies 4–200 (IVALTGGIGS…HRYLKLATAA (197 aa)). 12 to 17 (GSGKST) contributes to the ATP binding site.

The protein belongs to the CoaE family.

It is found in the cytoplasm. The catalysed reaction is 3'-dephospho-CoA + ATP = ADP + CoA + H(+). It participates in cofactor biosynthesis; coenzyme A biosynthesis; CoA from (R)-pantothenate: step 5/5. Catalyzes the phosphorylation of the 3'-hydroxyl group of dephosphocoenzyme A to form coenzyme A. The chain is Dephospho-CoA kinase from Yersinia pestis.